A 312-amino-acid chain; its full sequence is Polyprenyl transferase atnF (312 aa).

N-linked (GlcNAc...) asparagine glycosylation occurs at asparagine 9. Transmembrane regions (helical) follow at residues leucine 30–alanine 50, phenylalanine 64–isoleucine 84, alanine 111–glycine 131, alanine 132–lysine 152, isoleucine 154–tryptophan 174, glycine 185–isoleucine 205, tyrosine 229–alanine 249, glycine 255–methionine 275, and isoleucine 288–serine 308.

This sequence belongs to the UbiA prenyltransferase family. Mg(2+) serves as cofactor.

It localises to the membrane. The protein operates within secondary metabolite biosynthesis; terpenoid biosynthesis. Its function is as follows. Polyprenyl transferase; part of the gene cluster that mediates the biosynthesis of the meroterpenoids arthripenoids. The pathway begins with the HR-PKS atnH that catalyzes two chain-extension steps to form a reduced triketide, which then primes the SAT domain in the NR-PKS atnG to initiate three more cycles of extension to give a linear hexaketide corresponding to the polyketide part of arthripenoids. The FAD-dependent monooxygenase atnJ then performs an oxidative decarboxylation at C11 of the atnH/atnG product, via an electrophilic aromatic hydroxylation with concomitant ipso-decarboxylation. The membrane-bound polyprenyl transferase atnF then introduces a farnesyl group before the FAD-dependent monooxygenase atnK functions as the first epoxidase on terminal C12'-C13' olefin, followed by a second epoxidation on C7'-C8' catalyzed by atnA. The terpene cyclase/mutase atnI then initiates the sequential tricyclic ring formation through protonation of the terminal epoxide and catalyzes the regioselective and stereoselective 6/6/6-tricyclic ring formation. The cytochrome P450 monooxygenase atnM is responsible for hydroxylating both C1' and C10'. The next steps may involve ketoreduction and acetyl transfer by the ketoreductase atnB and the acetyltransferase atnC, and lead to the production of arthripenoid B, the final biosynthetic product of the atn cluster. The hydroquinone moiety in arthripenoid B is prone to undergo spontaneous oxidation to afford a benzoquinone compound, a key intermediate for generating structure diversity. For instance, addition of a cysteine followed by ring contraction gives arthripenoid A, tautomerization gives the main product arthripenoid C, addition of a molecular of water or amine affords arthripenoid D or E, respectively, and loss of one water forms arthripenoid F. This is Polyprenyl transferase atnF from Arthrinium sp.